We begin with the raw amino-acid sequence, 240 residues long: Ubiquinone biosynthesis O-methyltransferase (240 aa).

S-adenosyl-L-methionine contacts are provided by Arg44, Gly64, Asp85, and Met129.

Belongs to the methyltransferase superfamily. UbiG/COQ3 family.

The enzyme catalyses a 3-demethylubiquinol + S-adenosyl-L-methionine = a ubiquinol + S-adenosyl-L-homocysteine + H(+). The catalysed reaction is a 3-(all-trans-polyprenyl)benzene-1,2-diol + S-adenosyl-L-methionine = a 2-methoxy-6-(all-trans-polyprenyl)phenol + S-adenosyl-L-homocysteine + H(+). Its pathway is cofactor biosynthesis; ubiquinone biosynthesis. O-methyltransferase that catalyzes the 2 O-methylation steps in the ubiquinone biosynthetic pathway. The sequence is that of Ubiquinone biosynthesis O-methyltransferase from Escherichia coli O6:H1 (strain CFT073 / ATCC 700928 / UPEC).